The following is a 124-amino-acid chain: Insulin-like growth factor 1 (124 aa).

Residues 1–19 (IHFFYLGLCLLTLTSSAAA) constitute a propeptide that is removed on maturation. The tract at residues 20-48 (GPETLCGAELVDALQFVCGDRGFYFSKPT) is b. 3 disulfide bridges follow: cysteine 25–cysteine 67, cysteine 37–cysteine 80, and cysteine 66–cysteine 71. The c stretch occupies residues 49-60 (GYGSSSRRLHHK). The interval 61-81 (GIVDECCFQSCDLRRLEMYCA) is a. The tract at residues 82–89 (PIKPPKSA) is d. The disordered stretch occupies residues 86-124 (PKSARSVRAQRHTDMPKAQKEVHLKNTSRGNTGNRNYRM). A propeptide spans 90–124 (RSVRAQRHTDMPKAQKEVHLKNTSRGNTGNRNYRM) (e peptide). The segment covering 96-109 (RHTDMPKAQKEVHL) has biased composition (basic and acidic residues). A compositionally biased stretch (polar residues) spans 110-124 (KNTSRGNTGNRNYRM).

The protein belongs to the insulin family.

It localises to the secreted. In terms of biological role, the insulin-like growth factors, isolated from plasma, are structurally and functionally related to insulin but have a much higher growth-promoting activity. Acts as a ligand for IGF1R. Binds to the alpha subunit of IGF1R, leading to the activation of the intrinsic tyrosine kinase activity which autophosphorylates tyrosine residues in the beta subunit thus initiatiating a cascade of down-stream signaling events leading to activation of the PI3K-AKT/PKB and the Ras-MAPK pathways. Binds to integrins. Its binding to integrins and subsequent ternary complex formation with integrins and IGFR1 are essential for IGF1 signaling. This is Insulin-like growth factor 1 from Coturnix japonica (Japanese quail).